We begin with the raw amino-acid sequence, 413 residues long: Aspartate aminotransferase, cytoplasmic (413 aa).

L-aspartate-binding residues include G39 and W141. S149 is subject to Phosphoserine. N195 is a binding site for L-aspartate. K259 bears the N6-(pyridoxal phosphate)lysine mark. R387 serves as a coordination point for L-aspartate.

The protein belongs to the class-I pyridoxal-phosphate-dependent aminotransferase family. In terms of assembly, homodimer. Pyridoxal 5'-phosphate is required as a cofactor.

The protein localises to the cytoplasm. It carries out the reaction L-aspartate + 2-oxoglutarate = oxaloacetate + L-glutamate. The catalysed reaction is L-cysteine + 2-oxoglutarate = 2-oxo-3-sulfanylpropanoate + L-glutamate. It catalyses the reaction (2S)-2-aminobutanoate + 2-oxoglutarate = 2-oxobutanoate + L-glutamate. The enzyme catalyses 3-sulfino-L-alanine + 2-oxoglutarate = 3-sulfinopyruvate + L-glutamate. Functionally, biosynthesis of L-glutamate from L-aspartate or L-cysteine. Important regulator of levels of glutamate, the major excitatory neurotransmitter of the vertebrate central nervous system. Acts as a scavenger of glutamate in brain neuroprotection. The aspartate aminotransferase activity is involved in hepatic glucose synthesis during development and in adipocyte glyceroneogenesis. Using L-cysteine as substrate, regulates levels of mercaptopyruvate, an important source of hydrogen sulfide. Mercaptopyruvate is converted into H(2)S via the action of 3-mercaptopyruvate sulfurtransferase (3MST). Hydrogen sulfide is an important synaptic modulator and neuroprotectant in the brain. The polypeptide is Aspartate aminotransferase, cytoplasmic (Macaca fascicularis (Crab-eating macaque)).